A 193-amino-acid polypeptide reads, in one-letter code: Selenoprotein S A (193 aa).

A helical transmembrane segment spans residues 29-49; it reads WALASYGWYILFGCIILYFLI. Positions 114–125 are enriched in basic and acidic residues; sequence IETWDRMQEGKS. The interval 114 to 193 is disordered; the sequence is IETWDRMQEG…RRGPSSGGUG (80 aa). Residues 137–153 are compositionally biased toward low complexity; that stretch reads SPSTSASSSPSTSSSAP. Position 192 (Sec-192) is a non-standard amino acid, selenocysteine.

The protein belongs to the selenoprotein S family.

Its subcellular location is the endoplasmic reticulum membrane. It localises to the cytoplasm. Its function is as follows. Involved in the degradation process of misfolded endoplasmic reticulum (ER) luminal proteins. Participates in the transfer of misfolded proteins from the ER to the cytosol, where they are destroyed by the proteasome in a ubiquitin-dependent manner. This chain is Selenoprotein S A (vimp-a), found in Xenopus laevis (African clawed frog).